The chain runs to 147 residues: D-aminoacyl-tRNA deacylase (147 aa).

Residues 137 to 138 (GP) carry the Gly-cisPro motif, important for rejection of L-amino acids motif.

Belongs to the DTD family. Homodimer.

The protein resides in the cytoplasm. The enzyme catalyses glycyl-tRNA(Ala) + H2O = tRNA(Ala) + glycine + H(+). It carries out the reaction a D-aminoacyl-tRNA + H2O = a tRNA + a D-alpha-amino acid + H(+). Functionally, an aminoacyl-tRNA editing enzyme that deacylates mischarged D-aminoacyl-tRNAs. Also deacylates mischarged glycyl-tRNA(Ala), protecting cells against glycine mischarging by AlaRS. Acts via tRNA-based rather than protein-based catalysis; rejects L-amino acids rather than detecting D-amino acids in the active site. By recycling D-aminoacyl-tRNA to D-amino acids and free tRNA molecules, this enzyme counteracts the toxicity associated with the formation of D-aminoacyl-tRNA entities in vivo and helps enforce protein L-homochirality. The polypeptide is D-aminoacyl-tRNA deacylase (Acinetobacter baumannii (strain ATCC 17978 / DSM 105126 / CIP 53.77 / LMG 1025 / NCDC KC755 / 5377)).